A 196-amino-acid chain; its full sequence is RNA pyrophosphohydrolase (196 aa).

A Nudix hydrolase domain is found at 6–149 (GYRPNVGIVI…KRDVYRKVMK (144 aa)). The Nudix box motif lies at 38–59 (GGINDNESAEQAMYRELHEEVG). Residues 166–196 (SREANSQSNSANKKYSQTKYTKRHFYKSKGQ) are disordered. Residues 167-184 (REANSQSNSANKKYSQTK) are compositionally biased toward polar residues. Positions 185-196 (YTKRHFYKSKGQ) are enriched in basic residues.

The protein belongs to the Nudix hydrolase family. RppH subfamily. A divalent metal cation is required as a cofactor.

Its function is as follows. Accelerates the degradation of transcripts by removing pyrophosphate from the 5'-end of triphosphorylated RNA, leading to a more labile monophosphorylated state that can stimulate subsequent ribonuclease cleavage. The sequence is that of RNA pyrophosphohydrolase from Haemophilus influenzae (strain 86-028NP).